The following is a 182-amino-acid chain: UPF0397 protein BcerKBAB4_2500 (182 aa).

The next 5 helical transmembrane spans lie at 9–29 (VVAI…GFSI), 40–60 (AILT…IGLI), 71–91 (WGIW…MGLI), 114–134 (IAGL…DIIV), and 142–162 (IVIQ…VLGL).

Belongs to the UPF0397 family.

It is found in the cell membrane. The polypeptide is UPF0397 protein BcerKBAB4_2500 (Bacillus mycoides (strain KBAB4) (Bacillus weihenstephanensis)).